The chain runs to 250 residues: Hydroxyethylthiazole kinase (250 aa).

Met39 contributes to the substrate binding site. Residues Arg114 and Thr159 each coordinate ATP. Gly186 contributes to the substrate binding site.

The protein belongs to the Thz kinase family. Requires Mg(2+) as cofactor.

The catalysed reaction is 5-(2-hydroxyethyl)-4-methylthiazole + ATP = 4-methyl-5-(2-phosphooxyethyl)-thiazole + ADP + H(+). It participates in cofactor biosynthesis; thiamine diphosphate biosynthesis; 4-methyl-5-(2-phosphoethyl)-thiazole from 5-(2-hydroxyethyl)-4-methylthiazole: step 1/1. In terms of biological role, catalyzes the phosphorylation of the hydroxyl group of 4-methyl-5-beta-hydroxyethylthiazole (THZ). The chain is Hydroxyethylthiazole kinase from Lactococcus lactis subsp. lactis (strain IL1403) (Streptococcus lactis).